The primary structure comprises 139 residues: MNISDVAKKTGLTSKAIRFYEEKKLVTPPVRTDNGYRSYTAKHIEELTLLRQARQVGFTLDECRELLALFHNPARHSADVKAATLLKVAEIEQHINDLNQMRMRLLALAEECPGDEGADCPIINSLAGCCHSSSSLPLK.

The HTH merR-type domain occupies 1–69 (MNISDVAKKT…LDECRELLAL (69 aa)). The H-T-H motif DNA-binding region spans 4-23 (SDVAKKTGLTSKAIRFYEEK). 2 residues coordinate Cu(+): C112 and C120.

As to quaternary structure, homodimer.

It localises to the cytoplasm. Functionally, regulates the transcription of the copA and cueO genes. It detects cytoplasmic copper stress and activates transcription in response to increasing copper concentrations. This chain is HTH-type transcriptional regulator CueR (cueR), found in Yersinia pestis.